A 430-amino-acid polypeptide reads, in one-letter code: Serine--tRNA ligase (430 aa).

An L-serine-binding site is contributed by 234–236 (TAE). Residue 265–267 (RRE) coordinates ATP. Residue Glu288 coordinates L-serine. Position 352-355 (352-355 (EISS)) interacts with ATP. Ser388 is an L-serine binding site.

The protein belongs to the class-II aminoacyl-tRNA synthetase family. Type-1 seryl-tRNA synthetase subfamily. As to quaternary structure, homodimer. The tRNA molecule binds across the dimer.

The protein resides in the cytoplasm. It catalyses the reaction tRNA(Ser) + L-serine + ATP = L-seryl-tRNA(Ser) + AMP + diphosphate + H(+). The enzyme catalyses tRNA(Sec) + L-serine + ATP = L-seryl-tRNA(Sec) + AMP + diphosphate + H(+). It participates in aminoacyl-tRNA biosynthesis; selenocysteinyl-tRNA(Sec) biosynthesis; L-seryl-tRNA(Sec) from L-serine and tRNA(Sec): step 1/1. Catalyzes the attachment of serine to tRNA(Ser). Is also able to aminoacylate tRNA(Sec) with serine, to form the misacylated tRNA L-seryl-tRNA(Sec), which will be further converted into selenocysteinyl-tRNA(Sec). The protein is Serine--tRNA ligase of Thermosynechococcus vestitus (strain NIES-2133 / IAM M-273 / BP-1).